We begin with the raw amino-acid sequence, 202 residues long: Matrix protein (202 aa).

The segment at 9–31 (KNRRDEDTQKSSPASAPLDDDDL) is disordered. Residues 35 to 38 (PPEY) carry the PPXY motif motif. The essential for glycoprotein binding stretch occupies residues 115–151 (KLRRTFIFQWADSRGPLEGEELEYSQEITWDDDTEFV).

It belongs to the lyssavirus matrix protein family. In terms of assembly, homomultimer. Interacts with nucleoprotein and with the cytoplasmic domain of glycoprotein. Interacts with host ATP6V1A; this interaction plays an important role in virion uncoating after viral entry.

It is found in the virion membrane. The protein localises to the host endomembrane system. Its subcellular location is the host cytoplasm. Its function is as follows. Plays a major role in assembly, budding and uncoating of virion after membrane fusion. Completely covers the ribonucleoprotein coil and keep it in condensed bullet-shaped form. Inhibits viral transcription and stimulates replication. Plays a major role in early induction of TRAIL-mediated apoptosis in infected neurons. Inhibits the integrated stress response (ISR) in the infected cell by blocking the formation of stress granules. In Rabies virus (strain SAD B19) (RABV), this protein is Matrix protein (M).